An 85-amino-acid polypeptide reads, in one-letter code: MKLLLLLIVSASMLIESLVNADGYIKRRDGCKVACLVGNEGCDKECKAYGGSYGYCWTWGLACWCEGLPDDKTWKSETNTCGGKK.

Positions 1-21 are cleaved as a signal peptide; that stretch reads MKLLLLLIVSASMLIESLVNA. Residues 22-82 form the LCN-type CS-alpha/beta domain; that stretch reads DGYIKRRDGC…TWKSETNTCG (61 aa). 4 disulfide bridges follow: Cys-31–Cys-81, Cys-35–Cys-56, Cys-42–Cys-63, and Cys-46–Cys-65. Gly-82 carries the post-translational modification Glycine amide.

Belongs to the long (4 C-C) scorpion toxin superfamily. Sodium channel inhibitor family. Beta subfamily. As to expression, expressed by the venom gland.

It is found in the secreted. Depressant insect toxins cause a transient contraction paralysis followed by a slow flaccid paralysis. They bind voltage-independently to sodium channels (Nav) and block action potentials, primarily by depolarizing the axonal membrane and suppressing the sodium current. The sequence is that of Insect toxin 2-53 from Leiurus hebraeus (Hebrew deathstalker scorpion).